The primary structure comprises 119 residues: Ribonuclease P protein component (119 aa).

This sequence belongs to the RnpA family. Consists of a catalytic RNA component (M1 or rnpB) and a protein subunit.

It carries out the reaction Endonucleolytic cleavage of RNA, removing 5'-extranucleotides from tRNA precursor.. In terms of biological role, RNaseP catalyzes the removal of the 5'-leader sequence from pre-tRNA to produce the mature 5'-terminus. It can also cleave other RNA substrates such as 4.5S RNA. The protein component plays an auxiliary but essential role in vivo by binding to the 5'-leader sequence and broadening the substrate specificity of the ribozyme. The chain is Ribonuclease P protein component from Streptococcus equi subsp. equi (strain 4047).